Reading from the N-terminus, the 212-residue chain is Methylthioribulose-1-phosphate dehydratase (212 aa).

The Zn(2+) site is built by His-97 and His-99.

This sequence belongs to the aldolase class II family. MtnB subfamily. In terms of assembly, homotetramer. Requires Zn(2+) as cofactor.

The catalysed reaction is 5-(methylsulfanyl)-D-ribulose 1-phosphate = 5-methylsulfanyl-2,3-dioxopentyl phosphate + H2O. Its pathway is amino-acid biosynthesis; L-methionine biosynthesis via salvage pathway; L-methionine from S-methyl-5-thio-alpha-D-ribose 1-phosphate: step 2/6. In terms of biological role, catalyzes the dehydration of methylthioribulose-1-phosphate (MTRu-1-P) into 2,3-diketo-5-methylthiopentyl-1-phosphate (DK-MTP-1-P). This chain is Methylthioribulose-1-phosphate dehydratase, found in Bacillus cereus (strain G9842).